A 355-amino-acid chain; its full sequence is Nuclear speckle splicing regulatory protein 1 homolog (355 aa).

The tract at residues methionine 1–serine 57 is disordered. Over residues asparagine 44 to serine 54 the composition is skewed to polar residues. Positions methionine 99–serine 162 form a coiled coil. Disordered regions lie at residues serine 253–tyrosine 292 and lysine 325–proline 355. Residues tyrosine 280–histidine 289 are compositionally biased toward basic and acidic residues. Positions serine 293–isoleucine 326 form a coiled coil. A compositionally biased stretch (polar residues) spans serine 329–serine 339. Over residues glutamine 346–proline 355 the composition is skewed to basic residues.

It belongs to the NSRP1 family.

This chain is Nuclear speckle splicing regulatory protein 1 homolog, found in Schizosaccharomyces pombe (strain 972 / ATCC 24843) (Fission yeast).